The sequence spans 153 residues: Ribosome-binding factor A (153 aa).

Positions Asp-116–Val-153 are disordered. Residues Val-119–Glu-132 are compositionally biased toward low complexity.

Belongs to the RbfA family. Monomer. Binds 30S ribosomal subunits, but not 50S ribosomal subunits or 70S ribosomes.

It is found in the cytoplasm. Its function is as follows. One of several proteins that assist in the late maturation steps of the functional core of the 30S ribosomal subunit. Associates with free 30S ribosomal subunits (but not with 30S subunits that are part of 70S ribosomes or polysomes). Required for efficient processing of 16S rRNA. May interact with the 5'-terminal helix region of 16S rRNA. The sequence is that of Ribosome-binding factor A from Kocuria rhizophila (strain ATCC 9341 / DSM 348 / NBRC 103217 / DC2201).